The primary structure comprises 526 residues: Vang-like protein 2 (526 aa).

Positions 1–95 (MDNESQYSGY…NEDLTRASKE (95 aa)) are disordered. At 1–109 (MDNESQYSGY…SPLECRRFAG (109 aa)) the chain is on the cytoplasmic side. Residues 15-33 (SHSRSSRKHRDRRDRHRSK) show a composition bias toward basic residues. Basic and acidic residues-rich tracts occupy residues 34–43 (SRDSSSRGDK) and 58–68 (ESTRGDDRDDN). Over residues 70 to 83 (GETTTVVTGTSEHS) the composition is skewed to low complexity. The span at 84 to 95 (VSNEDLTRASKE) shows a compositional bias: basic and acidic residues. Residues 110–130 (PIVSGVLGLFALLTPLAFLLL) traverse the membrane as a helical segment. Residues 131 to 148 (PQLLWRDSLEPCGTPCEG) are Extracellular-facing. A helical transmembrane segment spans residues 149-169 (LYVSLAFKLLVLLISSWALFL). At 170–178 (RPSRSTLPR) the chain is on the cytoplasmic side. Residues 179 to 199 (FFVFRCLLMALVFLFVASYWL) traverse the membrane as a helical segment. Residues 200–215 (FYGVRVLEPRERDYRG) are Extracellular-facing. A helical transmembrane segment spans residues 216–236 (IVGYAVSLVDALLFIQYLALV). Residues 237–526 (LLEVRHLRPA…VMRLQSETSV (290 aa)) are Cytoplasmic-facing. Positions 523 to 526 (ETSV) match the PDZ-binding motif.

Belongs to the Vang family. As to quaternary structure, interacts with the PDZ domain of dvl2/dsh. In terms of tissue distribution, ubiquitously expressed at the 4-cell stage. In early somitogenesis, becomes more abundant in anterior neural tissue where expression is seen in the neural tube but not in the notochord.

The protein resides in the cell membrane. Plays a role in non-canonical Wnt/planar cell polarity (PCP) signaling to regulate convergent extension cell movements during gastrulation. Acts together with scrib and prickle1 and localizes prickle1 and dvl2/dsh to the plasma membrane. Has an overlapping role with kny during both convergent extension and eye development. In the eye, involved in establishing proper alignment of the anterior neural plate and midline cells expressing shha and shhb/twhh. Has indirect effects on a number of other developmental processes including notochord shape formation, neural progenitor cell morphogenesis, segregation of somites and adaxial cell development. Together with prickle1, required for the posterior (caudal) movement of branchiomotor neurons in the hindbrain independently of, and a few hours after, convergent extension. May be required for cell surface localization of fzd3 and fzd6 in the inner ear. The polypeptide is Vang-like protein 2 (Danio rerio (Zebrafish)).